A 230-amino-acid polypeptide reads, in one-letter code: 7-cyano-7-deazaguanine synthase (230 aa).

8-18 (FSGGQDSTTCL) contributes to the ATP binding site. Zn(2+)-binding residues include cysteine 187, cysteine 196, cysteine 199, and cysteine 202.

Belongs to the QueC family. Zn(2+) is required as a cofactor.

It catalyses the reaction 7-carboxy-7-deazaguanine + NH4(+) + ATP = 7-cyano-7-deazaguanine + ADP + phosphate + H2O + H(+). It participates in purine metabolism; 7-cyano-7-deazaguanine biosynthesis. Its function is as follows. Catalyzes the ATP-dependent conversion of 7-carboxy-7-deazaguanine (CDG) to 7-cyano-7-deazaguanine (preQ(0)). In Shewanella amazonensis (strain ATCC BAA-1098 / SB2B), this protein is 7-cyano-7-deazaguanine synthase.